The following is a 389-amino-acid chain: 8-amino-7-oxononanoate synthase (389 aa).

Residue arginine 23 coordinates substrate. 114 to 115 (GY) is a binding site for pyridoxal 5'-phosphate. Histidine 139 contacts substrate. Residues serine 185, histidine 213, and threonine 242 each contribute to the pyridoxal 5'-phosphate site. Lysine 245 is subject to N6-(pyridoxal phosphate)lysine. Threonine 357 serves as a coordination point for substrate.

It belongs to the class-II pyridoxal-phosphate-dependent aminotransferase family. BioF subfamily. In terms of assembly, homodimer. It depends on pyridoxal 5'-phosphate as a cofactor.

It catalyses the reaction 6-carboxyhexanoyl-[ACP] + L-alanine + H(+) = (8S)-8-amino-7-oxononanoate + holo-[ACP] + CO2. It participates in cofactor biosynthesis; biotin biosynthesis. Catalyzes the decarboxylative condensation of pimeloyl-[acyl-carrier protein] and L-alanine to produce 8-amino-7-oxononanoate (AON), [acyl-carrier protein], and carbon dioxide. The polypeptide is 8-amino-7-oxononanoate synthase (Acidithiobacillus ferrooxidans (strain ATCC 23270 / DSM 14882 / CIP 104768 / NCIMB 8455) (Ferrobacillus ferrooxidans (strain ATCC 23270))).